The chain runs to 198 residues: Glycerol-3-phosphate acyltransferase 1 (198 aa).

The next 5 membrane-spanning stretches (helical) occupy residues 5–25 (ALLA…AWLA), 52–72 (GPAL…VLLA), 81–101 (WAAL…FLAF), 111–131 (FGVI…LAIA), and 138–158 (FVSA…LVLP).

It belongs to the PlsY family. Probably interacts with PlsX.

It is found in the cell membrane. It carries out the reaction an acyl phosphate + sn-glycerol 3-phosphate = a 1-acyl-sn-glycero-3-phosphate + phosphate. Its pathway is lipid metabolism; phospholipid metabolism. Functionally, catalyzes the transfer of an acyl group from acyl-phosphate (acyl-PO(4)) to glycerol-3-phosphate (G3P) to form lysophosphatidic acid (LPA). This enzyme utilizes acyl-phosphate as fatty acyl donor, but not acyl-CoA or acyl-ACP. The sequence is that of Glycerol-3-phosphate acyltransferase 1 from Deinococcus radiodurans (strain ATCC 13939 / DSM 20539 / JCM 16871 / CCUG 27074 / LMG 4051 / NBRC 15346 / NCIMB 9279 / VKM B-1422 / R1).